The following is a 156-amino-acid chain: Large ribosomal subunit protein eL24 (156 aa).

Positions 87–156 (LELIKERRSQ…AFQKVHATSR (70 aa)) are disordered. A compositionally biased stretch (basic and acidic residues) spans 89–129 (LIKERRSQKPSDRKAARDVKLAKDKEAKKADKAARKAEKAK). Residues 130-147 (SAAAGAQSKVSKQQSKGA) show a composition bias toward low complexity.

Belongs to the eukaryotic ribosomal protein eL24 family.

In Debaryomyces hansenii (strain ATCC 36239 / CBS 767 / BCRC 21394 / JCM 1990 / NBRC 0083 / IGC 2968) (Yeast), this protein is Large ribosomal subunit protein eL24 (RPL24).